The chain runs to 702 residues: Methionine--tRNA ligase (702 aa).

The 'HIGH' region motif lies at Pro-23 to His-33. Zn(2+) is bound by residues Cys-154, Cys-157, Cys-167, and Cys-170. The 'KMSKS' region motif lies at Lys-341–Ser-345. Lys-344 contacts ATP. The disordered stretch occupies residues Leu-562–Pro-593. A compositionally biased stretch (polar residues) spans Ala-569–Asn-578. In terms of domain architecture, tRNA-binding spans Asp-599–Arg-702.

It belongs to the class-I aminoacyl-tRNA synthetase family. MetG type 1 subfamily. In terms of assembly, homodimer. It depends on Zn(2+) as a cofactor.

It is found in the cytoplasm. It catalyses the reaction tRNA(Met) + L-methionine + ATP = L-methionyl-tRNA(Met) + AMP + diphosphate. Functionally, is required not only for elongation of protein synthesis but also for the initiation of all mRNA translation through initiator tRNA(fMet) aminoacylation. The sequence is that of Methionine--tRNA ligase from Xylella fastidiosa (strain 9a5c).